A 207-amino-acid chain; its full sequence is Melanocortin-2 receptor accessory protein 2 (207 aa).

The tract at residues 1–21 (MEMSAQRLASNRTSPQSPSNS) is disordered. The segment covering 7–21 (RLASNRTSPQSPSNS) has biased composition (polar residues). N-linked (GlcNAc...) asparagine glycosylation occurs at Asn-11. A helical transmembrane segment spans residues 47–67 (IVIGFWVGLAVFVIFMFFVLT). Ser-91 bears the Phosphoserine mark.

The protein belongs to the MRAP family. In terms of assembly, homodimer and heterodimer. Forms antiparallel homodimers and heterodimers with MRAP. Interacts with MC1R, MC2R, MC3R and MC5R. Interacts with MC4R. Predominantly expressed in the brain, mainly in the pons and cerebellum but also in regions involved in energy homeostasis, such as the hypothalamus and brainstem.

Its subcellular location is the cell membrane. It localises to the endoplasmic reticulum membrane. In terms of biological role, modulator of melanocortin receptor 4 (MC4R), a receptor involved in energy homeostasis. Plays a central role in the control of energy homeostasis and body weight regulation by increasing ligand-sensitivity of MC4R and MC4R-mediated generation of cAMP. May also act as a negative regulator of MC2R: competes with MRAP for binding to MC2R and impairs the binding of corticotropin (ACTH) to MC2R. May also regulate activity of other melanocortin receptors (MC1R, MC3R and MC5R); however, additional evidence is required in vivo. The polypeptide is Melanocortin-2 receptor accessory protein 2 (Mrap2) (Mus musculus (Mouse)).